The primary structure comprises 270 residues: Formamidopyrimidine-DNA glycosylase (270 aa).

Catalysis depends on Pro2, which acts as the Schiff-base intermediate with DNA. The active-site Proton donor is Glu3. Residue Lys57 is the Proton donor; for beta-elimination activity of the active site. Residues His90, Arg109, and Arg151 each contribute to the DNA site. Residues 236–270 (QVYGRGGKLCMVCSNRLKEVRLGQRSTVYCTQCQR) form an FPG-type zinc finger. Arg260 acts as the Proton donor; for delta-elimination activity in catalysis.

The protein belongs to the FPG family. Monomer. Requires Zn(2+) as cofactor.

The enzyme catalyses Hydrolysis of DNA containing ring-opened 7-methylguanine residues, releasing 2,6-diamino-4-hydroxy-5-(N-methyl)formamidopyrimidine.. The catalysed reaction is 2'-deoxyribonucleotide-(2'-deoxyribose 5'-phosphate)-2'-deoxyribonucleotide-DNA = a 3'-end 2'-deoxyribonucleotide-(2,3-dehydro-2,3-deoxyribose 5'-phosphate)-DNA + a 5'-end 5'-phospho-2'-deoxyribonucleoside-DNA + H(+). Its function is as follows. Involved in base excision repair of DNA damaged by oxidation or by mutagenic agents. Acts as a DNA glycosylase that recognizes and removes damaged bases. Has a preference for oxidized purines, such as 7,8-dihydro-8-oxoguanine (8-oxoG). Has AP (apurinic/apyrimidinic) lyase activity and introduces nicks in the DNA strand. Cleaves the DNA backbone by beta-delta elimination to generate a single-strand break at the site of the removed base with both 3'- and 5'-phosphates. The protein is Formamidopyrimidine-DNA glycosylase of Idiomarina loihiensis (strain ATCC BAA-735 / DSM 15497 / L2-TR).